Consider the following 305-residue polypeptide: Putative UDP-glucose 4-epimerase (305 aa).

NAD(+) is bound by residues 10 to 11 (FI), 30 to 35 (DNLTTG), 50 to 51 (DI), and 71 to 75 (QAAQI). Positions 115 and 140 each coordinate substrate. Positions 140 and 144 each coordinate NAD(+). Tyrosine 140 (proton acceptor) is an active-site residue. Substrate-binding positions include asparagine 169, 183 to 184 (VI), 198 to 200 (IIF), arginine 207, and 263 to 266 (REGE).

Belongs to the NAD(P)-dependent epimerase/dehydratase family. NAD(+) is required as a cofactor.

The catalysed reaction is UDP-alpha-D-glucose = UDP-alpha-D-galactose. It participates in carbohydrate metabolism; galactose metabolism. Its function is as follows. Involved in the metabolism of galactose. Catalyzes the conversion of UDP-galactose (UDP-Gal) to UDP-glucose (UDP-Glc) through a mechanism involving the transient reduction of NAD. This chain is Putative UDP-glucose 4-epimerase, found in Methanocaldococcus jannaschii (strain ATCC 43067 / DSM 2661 / JAL-1 / JCM 10045 / NBRC 100440) (Methanococcus jannaschii).